A 521-amino-acid chain; its full sequence is Glutamyl-tRNA(Gln) amidotransferase subunit A (521 aa).

Catalysis depends on charge relay system residues lysine 79 and serine 187. Residue serine 211 is the Acyl-ester intermediate of the active site.

Belongs to the amidase family. GatA subfamily. As to quaternary structure, heterotrimer of A, B and C subunits.

The catalysed reaction is L-glutamyl-tRNA(Gln) + L-glutamine + ATP + H2O = L-glutaminyl-tRNA(Gln) + L-glutamate + ADP + phosphate + H(+). In terms of biological role, allows the formation of correctly charged Gln-tRNA(Gln) through the transamidation of misacylated Glu-tRNA(Gln) in organisms which lack glutaminyl-tRNA synthetase. The reaction takes place in the presence of glutamine and ATP through an activated gamma-phospho-Glu-tRNA(Gln). In Mesorhizobium japonicum (strain LMG 29417 / CECT 9101 / MAFF 303099) (Mesorhizobium loti (strain MAFF 303099)), this protein is Glutamyl-tRNA(Gln) amidotransferase subunit A.